A 57-amino-acid chain; its full sequence is MSFGLTGLTGTGLAGLAGLICIGLTISSGFSGSSILIHIHSLVQMHNLGTVYISYYK.

Residues 15–37 form a helical membrane-spanning segment; sequence GLAGLICIGLTISSGFSGSSILI.

It localises to the membrane. This is an uncharacterized protein from Dictyostelium discoideum (Social amoeba).